We begin with the raw amino-acid sequence, 173 residues long: NADH-ubiquinone oxidoreductase chain 6 (173 aa).

5 consecutive transmembrane segments (helical) span residues 1-21 (MTYFVLFLGLCFVLGSLAVAS), 27-47 (YGVVGLVLASIAGCGWLLSLG), 48-68 (VSFVSLVLFMVYLGGMLVVFV), 87-107 (VVGYGVGFVAVLMVGLIVGGF), and 139-159 (CGVGMFLVAGWGLLLTLFVVL).

This sequence belongs to the complex I subunit 6 family.

It is found in the mitochondrion membrane. It carries out the reaction a ubiquinone + NADH + 5 H(+)(in) = a ubiquinol + NAD(+) + 4 H(+)(out). Core subunit of the mitochondrial membrane respiratory chain NADH dehydrogenase (Complex I) that is believed to belong to the minimal assembly required for catalysis. Complex I functions in the transfer of electrons from NADH to the respiratory chain. The immediate electron acceptor for the enzyme is believed to be ubiquinone. This is NADH-ubiquinone oxidoreductase chain 6 (MT-ND6) from Aethia cristatella (Crested auklet).